Reading from the N-terminus, the 153-residue chain is NAD(P)H-quinone oxidoreductase subunit N (153 aa).

It belongs to the complex I NdhN subunit family. In terms of assembly, NDH-1 can be composed of about 15 different subunits; different subcomplexes with different compositions have been identified which probably have different functions.

The protein resides in the cellular thylakoid membrane. It carries out the reaction a plastoquinone + NADH + (n+1) H(+)(in) = a plastoquinol + NAD(+) + n H(+)(out). The enzyme catalyses a plastoquinone + NADPH + (n+1) H(+)(in) = a plastoquinol + NADP(+) + n H(+)(out). Its function is as follows. NDH-1 shuttles electrons from an unknown electron donor, via FMN and iron-sulfur (Fe-S) centers, to quinones in the respiratory and/or the photosynthetic chain. The immediate electron acceptor for the enzyme in this species is believed to be plastoquinone. Couples the redox reaction to proton translocation, and thus conserves the redox energy in a proton gradient. Cyanobacterial NDH-1 also plays a role in inorganic carbon-concentration. This is NAD(P)H-quinone oxidoreductase subunit N from Synechococcus sp. (strain CC9311).